A 395-amino-acid chain; its full sequence is Chorismate synthase (395 aa).

The NADP(+) site is built by Arg40 and Arg46. The tract at residues 98–120 (LPREGRNAPLSRPRPGHADLTGM) is disordered. Residues 134 to 136 (RSS), 256 to 257 (QA), Gly301, 316 to 320 (KPIPS), and Arg342 each bind FMN.

Belongs to the chorismate synthase family. Homotetramer. It depends on FMNH2 as a cofactor.

It catalyses the reaction 5-O-(1-carboxyvinyl)-3-phosphoshikimate = chorismate + phosphate. Its pathway is metabolic intermediate biosynthesis; chorismate biosynthesis; chorismate from D-erythrose 4-phosphate and phosphoenolpyruvate: step 7/7. Functionally, catalyzes the anti-1,4-elimination of the C-3 phosphate and the C-6 proR hydrogen from 5-enolpyruvylshikimate-3-phosphate (EPSP) to yield chorismate, which is the branch point compound that serves as the starting substrate for the three terminal pathways of aromatic amino acid biosynthesis. This reaction introduces a second double bond into the aromatic ring system. The sequence is that of Chorismate synthase from Bifidobacterium longum subsp. infantis (strain ATCC 15697 / DSM 20088 / JCM 1222 / NCTC 11817 / S12).